Reading from the N-terminus, the 442-residue chain is MFEKISQFLVPIAGRLNNNRYLQVLRDAFMLAFPLTIFGSIFVVLTNLPFLNKIMNASMLTSFQSHFGIASTATMGIMSVFVVFGIGYYLSKSYQVEAVFGGAIALVSFLLLTPFIIQPETGDAITGVIPVDRLGAKGMFLGMITAFLSGEIYRRIVQKNLTIKMPAGVPPAVAKSFAALIPAFITLTVFLLINVMVTLFFKTNMHDVIYHAIQAPLVGLGSGIIPTLIAVFFIQILWFFGLHGQIIINSVMDPIWNTLQVENLSAYTAGKEIPHIISKPFMEIYTVGMGGTGMTLAIVFTILIFMKSRQMKQVSKLGLAPGIFNVNEPIIFGLPIVMNPIIIVPWVLAPMVVTLVTYLAMSAGLVPPPTGVTVPWTVPLFINGIMATNSIMGGVMQLINLLIVFVIWFPFLKAMDKLNLAKEKEQAVQETAAQQNDNSIKM.

The region spanning 5-411 (ISQFLVPIAG…LIVFVIWFPF (407 aa)) is the PTS EIIC type-3 domain. 11 helical membrane-spanning segments follow: residues 28–48 (AFML…LTNL), 67–87 (FGIA…FGIG), 97–117 (EAVF…PFII), 138–157 (GMFL…RRIV), 177–197 (FAAL…NVMV), 205–225 (MHDV…SGII), 228–248 (LIAV…QIII), 286–306 (TVGM…LIFM), 329–349 (PIIF…WVLA), 365–385 (LVPP…INGI), and 391–411 (IMGG…WFPF).

It is found in the cell membrane. The phosphoenolpyruvate-dependent sugar phosphotransferase system (sugar PTS), a major carbohydrate active transport system, catalyzes the phosphorylation of incoming sugar substrates concomitantly with their translocation across the cell membrane. The enzyme II GmuABC PTS system is involved in the transport of oligo-glucomannans such as cellobiose or mannobiose. This Bacillus subtilis (strain 168) protein is PTS system oligo-beta-mannoside-specific EIIC component.